Consider the following 195-residue polypeptide: CASP-like protein 1B1 (195 aa).

At Met-1–Lys-15 the chain is on the cytoplasmic side. Residues Ile-16–Gly-36 form a helical membrane-spanning segment. Topologically, residues Leu-37–Ala-67 are extracellular. Residues Phe-68–Leu-88 form a helical membrane-spanning segment. The Cytoplasmic segment spans residues Gln-89–Ser-104. A helical membrane pass occupies residues Val-105–Phe-125. The Extracellular segment spans residues Met-126 to Ala-154. The helical transmembrane segment at Gly-155–Ile-175 threads the bilayer. Residues Ser-176–Pro-195 lie on the Cytoplasmic side of the membrane.

It belongs to the Casparian strip membrane proteins (CASP) family. Homodimer and heterodimers.

Its subcellular location is the cell membrane. The polypeptide is CASP-like protein 1B1 (Arabidopsis lyrata subsp. lyrata (Lyre-leaved rock-cress)).